The sequence spans 104 residues: Large ribosomal subunit protein bL21 (104 aa).

Belongs to the bacterial ribosomal protein bL21 family. Part of the 50S ribosomal subunit. Contacts protein L20.

This protein binds to 23S rRNA in the presence of protein L20. The polypeptide is Large ribosomal subunit protein bL21 (Pseudomonas putida (strain GB-1)).